The following is a 350-amino-acid chain: L-threonine 3-dehydrogenase (350 aa).

Residue C42 coordinates Zn(2+). Catalysis depends on charge relay system residues T44 and H47. The Zn(2+) site is built by H67, E68, C97, C100, C103, and C111. NAD(+) contacts are provided by residues L179, E199, R204, 266-268, and 291-292; these read LGL and IT.

This sequence belongs to the zinc-containing alcohol dehydrogenase family. In terms of assembly, homotetramer. Zn(2+) serves as cofactor.

It localises to the cytoplasm. The catalysed reaction is L-threonine + NAD(+) = (2S)-2-amino-3-oxobutanoate + NADH + H(+). The protein operates within amino-acid degradation; L-threonine degradation via oxydo-reductase pathway; glycine from L-threonine: step 1/2. In terms of biological role, catalyzes the NAD(+)-dependent oxidation of L-threonine to 2-amino-3-ketobutyrate. To a lesser extent, also catalyzes the oxidation of L-serine. The protein is L-threonine 3-dehydrogenase of Thermococcus kodakarensis (strain ATCC BAA-918 / JCM 12380 / KOD1) (Pyrococcus kodakaraensis (strain KOD1)).